Here is a 414-residue protein sequence, read N- to C-terminus: Tryptophan synthase beta chain (414 aa).

A disordered region spans residues 1–26 (MVSTFSRQDQNYKNDDLNQPSKEGRF). Residues 10–26 (QNYKNDDLNQPSKEGRF) are compositionally biased toward basic and acidic residues. The residue at position 109 (lysine 109) is an N6-(pyridoxal phosphate)lysine.

The protein belongs to the TrpB family. Tetramer of two alpha and two beta chains. It depends on pyridoxal 5'-phosphate as a cofactor.

It carries out the reaction (1S,2R)-1-C-(indol-3-yl)glycerol 3-phosphate + L-serine = D-glyceraldehyde 3-phosphate + L-tryptophan + H2O. Its pathway is amino-acid biosynthesis; L-tryptophan biosynthesis; L-tryptophan from chorismate: step 5/5. Functionally, the beta subunit is responsible for the synthesis of L-tryptophan from indole and L-serine. In Prochlorococcus marinus (strain MIT 9312), this protein is Tryptophan synthase beta chain.